The sequence spans 557 residues: Alpha-glucosidase (557 aa).

Residue D201 is the Nucleophile of the active site. E256 functions as the Proton donor in the catalytic mechanism.

Belongs to the glycosyl hydrolase 13 family.

It carries out the reaction Hydrolysis of terminal, non-reducing (1-&gt;4)-linked alpha-D-glucose residues with release of alpha-D-glucose.. The polypeptide is Alpha-glucosidase (agl) (Pediococcus pentosaceus).